We begin with the raw amino-acid sequence, 687 residues long: Guanine-nucleotide exchange factor YEL1 (687 aa).

A compositionally biased stretch (polar residues) spans 14–27 (YGVSQKGYNDNFSE). Disordered stretches follow at residues 14-35 (YGVSQKGYNDNFSESEGVLHGS) and 63-97 (AANDEKPVIPTTDTATAGTGTEDISSTQSEETDQN). The SEC7 domain occupies 57–264 (ILQNKEAAND…SEYYKTLNET (208 aa)). Low complexity predominate over residues 73 to 83 (TTDTATAGTGT). Phosphothreonine is present on threonine 290. Residues serine 293 and serine 299 each carry the phosphoserine modification. One can recognise a PH domain in the interval 412-551 (ASRRTSLSYL…DCINFWAGRI (140 aa)).

Belongs to the YEL1 family.

It localises to the cytoplasm. It is found in the cell membrane. The protein localises to the bud neck. Its subcellular location is the bud tip. Its function is as follows. Guanine nucleotide exchange factor for ARF3 required for localization of ARF3 to the bud neck and tip and involved in actin patch polarization. The protein is Guanine-nucleotide exchange factor YEL1 (YEL1) of Saccharomyces cerevisiae (strain RM11-1a) (Baker's yeast).